The chain runs to 357 residues: Protein phosphatase 1 regulatory subunit 42 (357 aa).

LRR repeat units follow at residues 29–50 (KITH…SLCR), 51–72 (NLSV…NYTT), 73–94 (NLTH…SSLK), 95–116 (KLEK…EGLE), 117–138 (ELRE…LFDP), 147–168 (SLST…EILE), and 169–190 (NLNH…ELLL). In terms of domain architecture, LRRCT spans 204–242 (NPVCLKPKYRDKLILTSKSLEFLDGKEIKDMERQFLMNW). The tract at residues 329-357 (ESSLTKNDIHEPHLLQNPKVKENLSEKKE) is disordered. Residues 335–357 (NDIHEPHLLQNPKVKENLSEKKE) are compositionally biased toward basic and acidic residues.

As to quaternary structure, interacts with PPP1CC isoform gamma-2; the interaction is direct. Interacts with actin, dynein, KIF5B, KIFC1 and tubulin. Associates with microtubules. In terms of processing, phosphorylated; during the first round of spermatogenesis with a marginal increase at 21 days after birth. Testis-specific. Expressed in spermatids (at protein level). Testis-specific.

It is found in the cytoplasm. The protein resides in the cytoskeleton. Its subcellular location is the microtubule organizing center. It localises to the centrosome. Regulates phosphatase activity of protein phosphatase 1 (PP1) complexes in the testis. This Mus musculus (Mouse) protein is Protein phosphatase 1 regulatory subunit 42 (Ppp1r42).